The primary structure comprises 527 residues: Bifunctional purine biosynthesis protein PurH (527 aa).

In terms of domain architecture, MGS-like spans 1 to 149; it reads MASDFLPVRR…KNFARVAVAT (149 aa).

The protein belongs to the PurH family.

The catalysed reaction is (6R)-10-formyltetrahydrofolate + 5-amino-1-(5-phospho-beta-D-ribosyl)imidazole-4-carboxamide = 5-formamido-1-(5-phospho-D-ribosyl)imidazole-4-carboxamide + (6S)-5,6,7,8-tetrahydrofolate. It carries out the reaction IMP + H2O = 5-formamido-1-(5-phospho-D-ribosyl)imidazole-4-carboxamide. It functions in the pathway purine metabolism; IMP biosynthesis via de novo pathway; 5-formamido-1-(5-phospho-D-ribosyl)imidazole-4-carboxamide from 5-amino-1-(5-phospho-D-ribosyl)imidazole-4-carboxamide (10-formyl THF route): step 1/1. It participates in purine metabolism; IMP biosynthesis via de novo pathway; IMP from 5-formamido-1-(5-phospho-D-ribosyl)imidazole-4-carboxamide: step 1/1. This is Bifunctional purine biosynthesis protein PurH from Xanthomonas campestris pv. campestris (strain 8004).